Here is a 306-residue protein sequence, read N- to C-terminus: D-aminoacyl-tRNA deacylase (306 aa).

Belongs to the DtdA deacylase family. As to quaternary structure, monomer. Zn(2+) serves as cofactor.

It carries out the reaction a D-aminoacyl-tRNA + H2O = a tRNA + a D-alpha-amino acid + H(+). It catalyses the reaction glycyl-tRNA(Ala) + H2O = tRNA(Ala) + glycine + H(+). Its function is as follows. D-aminoacyl-tRNA deacylase with broad substrate specificity. By recycling D-aminoacyl-tRNA to D-amino acids and free tRNA molecules, this enzyme counteracts the toxicity associated with the formation of D-aminoacyl-tRNA entities in vivo. This chain is D-aminoacyl-tRNA deacylase, found in Methanosarcina barkeri (strain Fusaro / DSM 804).